The sequence spans 462 residues: Indoleacetamide hydrolase (462 aa).

Active-site charge relay system residues include lysine 74 and serine 149. The active-site Acyl-ester intermediate is serine 173.

The protein belongs to the amidase family.

Its pathway is plant hormone metabolism; auxin biosynthesis. Its function is as follows. Hydrolyzes indole-3-acetamide (IAM) into indole-3-acetic acid (IAA). This Allorhizobium ampelinum (strain ATCC BAA-846 / DSM 112012 / S4) (Agrobacterium vitis (strain S4)) protein is Indoleacetamide hydrolase (iaaH).